Reading from the N-terminus, the 133-residue chain is Inhibitor of g-type lysozyme (133 aa).

Positions 1-22 (MKIKSIRKAVLLLALLTSTSFA) are cleaved as a signal peptide.

It is found in the periplasm. In terms of biological role, inhibits activity of g-type lysozyme, which confers increased lysozyme tolerance to the bacterium. This chain is Inhibitor of g-type lysozyme (pliG), found in Escherichia coli (strain K12).